Reading from the N-terminus, the 301-residue chain is MDIDARIKAYKFVAYSAVTFSVVAVVSVFITLPMVYNYVNNVKKQIHTDVNFCKVSARDIWSEVHLIKDAPGNNTRVARQAYSTGGAGGGGGGGGGGCDGCCNPGPPGPGGSPGKPGKPGKPGAPGAPGNPGKGASAPCEPVTQPPCQPCPGGPPGPAGPAGPPGPPGPDGNPGSPAGPSGPGPAGPPGPAGPAGNDGAPGAPGGPGEPGASEQGGPGEPGPAGPPGPAGPAGNDGAPGTGGPGPAGPKGPPGAAGAPGADGNPGGPGTAGKPGGEGEKGICPKYCAIDGGVFFEDGTRRR.

The first 37 residues, 1-37 (MDIDARIKAYKFVAYSAVTFSVVAVVSVFITLPMVYN), serve as a signal peptide directing secretion. Triple-helical region stretches follow at residues 105–134 (GPPG…PGKG), 153–176 (GPPG…PGSP), 183–212 (GPAG…PGAS), and 215–282 (GGPG…KGIC). The tract at residues 109–284 (PGGSPGKPGK…GEGEKGICPK (176 aa)) is disordered. Pro residues-rich tracts occupy residues 143–170 (TQPP…PGPD) and 179–191 (PSGP…PGPA). A compositionally biased stretch (gly residues) spans 201–218 (GAPGGPGEPGASEQGGPG). Pro residues predominate over residues 219-229 (EPGPAGPPGPA). The segment covering 252–261 (PGAAGAPGAD) has biased composition (low complexity). A compositionally biased stretch (gly residues) spans 262–274 (GNPGGPGTAGKPG).

This sequence belongs to the cuticular collagen family. As to quaternary structure, collagen polypeptide chains are complexed within the cuticle by disulfide bonds and other types of covalent cross-links. Syncytial dorsal and ventral epidermis.

Functionally, nematode cuticles are composed largely of collagen-like proteins. The cuticle functions both as an exoskeleton and as a barrier to protect the worm from its environment. This Caenorhabditis elegans protein is Cuticle collagen 2 (col-2).